A 241-amino-acid chain; its full sequence is 1-(5-phosphoribosyl)-5-[(5-phosphoribosylamino)methylideneamino] imidazole-4-carboxamide isomerase (241 aa).

Asp-8 serves as the catalytic Proton acceptor. Asp-130 serves as the catalytic Proton donor.

This sequence belongs to the HisA/HisF family.

The protein resides in the cytoplasm. It catalyses the reaction 1-(5-phospho-beta-D-ribosyl)-5-[(5-phospho-beta-D-ribosylamino)methylideneamino]imidazole-4-carboxamide = 5-[(5-phospho-1-deoxy-D-ribulos-1-ylimino)methylamino]-1-(5-phospho-beta-D-ribosyl)imidazole-4-carboxamide. It participates in amino-acid biosynthesis; L-histidine biosynthesis; L-histidine from 5-phospho-alpha-D-ribose 1-diphosphate: step 4/9. This chain is 1-(5-phosphoribosyl)-5-[(5-phosphoribosylamino)methylideneamino] imidazole-4-carboxamide isomerase, found in Flavobacterium psychrophilum (strain ATCC 49511 / DSM 21280 / CIP 103535 / JIP02/86).